A 251-amino-acid chain; its full sequence is Tyrosine phosphatase-like protein J3 (251 aa).

The Tyrosine-protein phosphatase domain maps to 26–251; it reads IADEYYTIVP…PVLQNSKRRE (226 aa).

It belongs to the protein-tyrosine phosphatase family.

This chain is Tyrosine phosphatase-like protein J3 (J4), found in Microplitis demolitor (Parasitoid wasp).